Consider the following 349-residue polypeptide: Anthranilate phosphoribosyltransferase (349 aa).

5-phospho-alpha-D-ribose 1-diphosphate-binding positions include glycine 82, 85–86 (GD), 92–95 (NVST), 110–118 (KHGNRGVSS), and serine 122. Glycine 82 serves as a coordination point for anthranilate. Mg(2+) is bound at residue serine 94. Residue asparagine 113 participates in anthranilate binding. Arginine 168 serves as a coordination point for anthranilate. The Mg(2+) site is built by aspartate 227 and glutamate 228.

Belongs to the anthranilate phosphoribosyltransferase family. Homodimer. Mg(2+) serves as cofactor.

It catalyses the reaction N-(5-phospho-beta-D-ribosyl)anthranilate + diphosphate = 5-phospho-alpha-D-ribose 1-diphosphate + anthranilate. It functions in the pathway amino-acid biosynthesis; L-tryptophan biosynthesis; L-tryptophan from chorismate: step 2/5. Catalyzes the transfer of the phosphoribosyl group of 5-phosphorylribose-1-pyrophosphate (PRPP) to anthranilate to yield N-(5'-phosphoribosyl)-anthranilate (PRA). This is Anthranilate phosphoribosyltransferase from Acinetobacter baumannii (strain ATCC 17978 / DSM 105126 / CIP 53.77 / LMG 1025 / NCDC KC755 / 5377).